The sequence spans 723 residues: ATP-dependent zinc metalloprotease YME1 homolog (723 aa).

A helical transmembrane segment spans residues 198-220; it reads LTRFYIFLVFCIFFGYLTGRIRV. 288-295 lines the ATP pocket; sequence GPPGTGKT. H509 serves as a coordination point for Zn(2+). E510 is an active-site residue. Residues H513 and D587 each coordinate Zn(2+).

It in the N-terminal section; belongs to the AAA ATPase family. In the C-terminal section; belongs to the peptidase M41 family. It depends on Zn(2+) as a cofactor.

Its subcellular location is the mitochondrion inner membrane. It is found in the mitochondrion. Functionally, ATP-dependent metalloprotease that catalyzes the degradation of folded and unfolded proteins with a suitable degron sequence in the mitochondrial intermembrane region. Plays an important role in regulating mitochondrial morphology and function. The chain is ATP-dependent zinc metalloprotease YME1 homolog (ymel-1) from Caenorhabditis elegans.